The sequence spans 328 residues: Acetyl-coenzyme A carboxylase carboxyl transferase subunit alpha (328 aa).

One can recognise a CoA carboxyltransferase C-terminal domain in the interval 42–296; it reads SFKEQLSILK…KESLISELHF (255 aa).

Belongs to the AccA family. As to quaternary structure, acetyl-CoA carboxylase is a heterohexamer composed of biotin carboxyl carrier protein (accB), biotin carboxylase (accC) and two subunits each of ACCase subunit alpha (accA) and ACCase subunit beta (accD).

The protein localises to the plastid. It localises to the chloroplast. The catalysed reaction is N(6)-carboxybiotinyl-L-lysyl-[protein] + acetyl-CoA = N(6)-biotinyl-L-lysyl-[protein] + malonyl-CoA. The protein operates within lipid metabolism; malonyl-CoA biosynthesis; malonyl-CoA from acetyl-CoA: step 1/1. Its function is as follows. Component of the acetyl coenzyme A carboxylase (ACC) complex. First, biotin carboxylase catalyzes the carboxylation of biotin on its carrier protein (BCCP) and then the CO(2) group is transferred by the carboxyltransferase to acetyl-CoA to form malonyl-CoA. The chain is Acetyl-coenzyme A carboxylase carboxyl transferase subunit alpha from Gracilaria tenuistipitata var. liui (Red alga).